A 93-amino-acid polypeptide reads, in one-letter code: Protein salt-induced and EIN3/EIL1-dependent 1 (93 aa).

Residues 23–36 show a composition bias toward low complexity; it reads SSLLTESSSSSLCS. A disordered region spans residues 23 to 46; it reads SSLLTESSSSSLCSEEAEGGGGEA.

Triggered by EIN3. Involved in ethylene-dependent salt stress responses by reducing reactive oxygen species (ROS) accumulation. The protein is Protein salt-induced and EIN3/EIL1-dependent 1 of Arabidopsis thaliana (Mouse-ear cress).